The following is a 701-amino-acid chain: Ribosomal RNA large subunit methyltransferase K/L (701 aa).

Residues 43–154 form the THUMP domain; sequence LLYQSLMWSR…KETAHISLDL (112 aa).

The protein belongs to the methyltransferase superfamily. RlmKL family.

The protein localises to the cytoplasm. The catalysed reaction is guanosine(2445) in 23S rRNA + S-adenosyl-L-methionine = N(2)-methylguanosine(2445) in 23S rRNA + S-adenosyl-L-homocysteine + H(+). It catalyses the reaction guanosine(2069) in 23S rRNA + S-adenosyl-L-methionine = N(2)-methylguanosine(2069) in 23S rRNA + S-adenosyl-L-homocysteine + H(+). Specifically methylates the guanine in position 2445 (m2G2445) and the guanine in position 2069 (m7G2069) of 23S rRNA. This Klebsiella pneumoniae (strain 342) protein is Ribosomal RNA large subunit methyltransferase K/L.